The following is an 810-amino-acid chain: Cell division control protein 48 homolog E (810 aa).

Ser2 bears the N-acetylserine mark. Phosphoserine is present on Ser41. ATP is bound by residues 248-255 and 521-528; these read GPPGSGKT and GPPGCGKT.

Belongs to the AAA ATPase family.

The protein resides in the nucleus. Its subcellular location is the cytoplasm. The protein localises to the cytoskeleton. It localises to the phragmoplast. In terms of biological role, probably functions in cell division and growth processes. Interacts with certain SNAREs as part of specialized membrane fusion events where vesicles from the same organelle fuse (homotypic fusion). The sequence is that of Cell division control protein 48 homolog E (CDC48E) from Arabidopsis thaliana (Mouse-ear cress).